Here is a 118-residue protein sequence, read N- to C-terminus: UPF0344 protein RBAM_010920 (118 aa).

The next 4 membrane-spanning stretches (helical) occupy residues 4–24 (WHITSWVVALILVFVSYGLYG), 33–53 (ITHMILRLFYIIIILTGAELF), 62–82 (EYAGKMLLGIITIGLMEMLVI), and 93–113 (LWIGFIIVLVLTVLLGLHLPI).

This sequence belongs to the UPF0344 family.

The protein resides in the cell membrane. The sequence is that of UPF0344 protein RBAM_010920 from Bacillus velezensis (strain DSM 23117 / BGSC 10A6 / LMG 26770 / FZB42) (Bacillus amyloliquefaciens subsp. plantarum).